The chain runs to 327 residues: Protein-L-isoaspartate O-methyltransferase (327 aa).

2 disordered regions span residues 1–38 (MSGE…DAAR) and 62–105 (PRAA…KSAT). Residues 14 to 29 (EDLKREPRKPEGRAAE) show a composition bias toward basic and acidic residues. Positions 62-77 (PRAAGASGSGVPVAKP) are enriched in low complexity. The segment covering 92 to 105 (APSSGVKNGDKSAT) has biased composition (polar residues). S175 is an active-site residue.

It belongs to the methyltransferase superfamily. L-isoaspartyl/D-aspartyl protein methyltransferase family.

It localises to the cytoplasm. It carries out the reaction [protein]-L-isoaspartate + S-adenosyl-L-methionine = [protein]-L-isoaspartate alpha-methyl ester + S-adenosyl-L-homocysteine. Catalyzes the methyl esterification of L-isoaspartyl residues in peptides and proteins that result from spontaneous decomposition of normal L-aspartyl and L-asparaginyl residues. It plays a role in the repair and/or degradation of damaged proteins. The protein is Protein-L-isoaspartate O-methyltransferase of Burkholderia thailandensis (strain ATCC 700388 / DSM 13276 / CCUG 48851 / CIP 106301 / E264).